We begin with the raw amino-acid sequence, 413 residues long: Replication factor C large subunit (413 aa).

54–61 contributes to the ATP binding site; it reads GPPGSGKT.

This sequence belongs to the activator 1 small subunits family. RfcL subfamily. In terms of assembly, heteromultimer composed of small subunits (RfcS) and large subunits (RfcL).

Part of the RFC clamp loader complex which loads the PCNA sliding clamp onto DNA. The polypeptide is Replication factor C large subunit (Thermofilum pendens (strain DSM 2475 / Hrk 5)).